Here is a 1519-residue protein sequence, read N- to C-terminus: DNA (cytosine-5)-methyltransferase 4 (1519 aa).

A compositionally biased stretch (basic and acidic residues) spans methionine 1–glutamate 24. The disordered stretch occupies residues methionine 1–alanine 31. Residue lysine 583 forms a Glycyl lysine isopeptide (Lys-Gly) (interchain with G-Cter in ubiquitin) linkage. The disordered stretch occupies residues glutamate 641–glutamate 668. Residues asparagine 642 to glutamate 668 are compositionally biased toward acidic residues. 2 consecutive BAH domains span residues aspartate 715–proline 849 and threonine 916–proline 1033. An SAM-dependent MTase C5-type domain is found at leucine 1078 to lysine 1512. The active site involves cysteine 1183.

The protein belongs to the class I-like SAM-binding methyltransferase superfamily. C5-methyltransferase family. As to expression, expressed at low levels in vegetative and floral organs.

It localises to the nucleus. It catalyses the reaction a 2'-deoxycytidine in DNA + S-adenosyl-L-methionine = a 5-methyl-2'-deoxycytidine in DNA + S-adenosyl-L-homocysteine + H(+). In terms of biological role, maintains chromatin CpG methylation that plays a role in genomic imprinting, regulation of embryogenesis and seed viability. Required for proper patterns of CG DNA methylation in dividing cells. This chain is DNA (cytosine-5)-methyltransferase 4 (MET4), found in Arabidopsis thaliana (Mouse-ear cress).